Reading from the N-terminus, the 76-residue chain is Small ribosomal subunit protein uS17 (76 aa).

Belongs to the universal ribosomal protein uS17 family. Part of the 30S ribosomal subunit.

Its function is as follows. One of the primary rRNA binding proteins, it binds specifically to the 5'-end of 16S ribosomal RNA. The polypeptide is Small ribosomal subunit protein uS17 (Anaplasma phagocytophilum (strain HZ)).